We begin with the raw amino-acid sequence, 932 residues long: 2-oxoglutarate dehydrogenase E1 component (932 aa).

It belongs to the alpha-ketoglutarate dehydrogenase family. As to quaternary structure, homodimer. Part of the 2-oxoglutarate dehydrogenase (OGDH) complex composed of E1 (2-oxoglutarate dehydrogenase), E2 (dihydrolipoamide succinyltransferase) and E3 (dihydrolipoamide dehydrogenase); the complex contains multiple copies of the three enzymatic components (E1, E2 and E3). Thiamine diphosphate is required as a cofactor.

The catalysed reaction is N(6)-[(R)-lipoyl]-L-lysyl-[protein] + 2-oxoglutarate + H(+) = N(6)-[(R)-S(8)-succinyldihydrolipoyl]-L-lysyl-[protein] + CO2. In terms of biological role, E1 component of the 2-oxoglutarate dehydrogenase (OGDH) complex which catalyzes the decarboxylation of 2-oxoglutarate, the first step in the conversion of 2-oxoglutarate to succinyl-CoA and CO(2). The polypeptide is 2-oxoglutarate dehydrogenase E1 component (Staphylococcus aureus (strain MW2)).